The following is a 919-amino-acid chain: UPF0182 protein Tery_4385 (919 aa).

A run of 7 helical transmembrane segments spans residues 6–26 (YIIIAISVILLVVFSLSRTLV), 52–72 (IFLWVGAFVIYFLFLWSNYWI), 96–116 (IFVKIIFLVNITLISLSAATA), 160–180 (WLFTLVFAGLIISIIVYALKG), 198–218 (THISLLLAGVTILIAVGFWFE), 243–263 (FAYWAMAIVALLLAVVCVLSV), and 268–288 (IIWPTYGIVIYIVLLGLFNVL).

The protein belongs to the UPF0182 family.

Its subcellular location is the cell membrane. This is UPF0182 protein Tery_4385 from Trichodesmium erythraeum (strain IMS101).